We begin with the raw amino-acid sequence, 483 residues long: UDP-N-acetylmuramoyl-L-alanyl-D-glutamate--2,6-diaminopimelate ligase (483 aa).

Residue Ser-29 participates in UDP-N-acetyl-alpha-D-muramoyl-L-alanyl-D-glutamate binding. Gly-107–Ser-113 contributes to the ATP binding site. Residues Thr-149–Thr-150, Ser-176, Gln-182, and Arg-184 each bind UDP-N-acetyl-alpha-D-muramoyl-L-alanyl-D-glutamate. Lys-216 carries the N6-carboxylysine modification. Residues Arg-380, Asp-404–Arg-407, Gly-452, and Glu-456 each bind meso-2,6-diaminopimelate. The Meso-diaminopimelate recognition motif motif lies at Asp-404–Arg-407.

This sequence belongs to the MurCDEF family. MurE subfamily. The cofactor is Mg(2+). In terms of processing, carboxylation is probably crucial for Mg(2+) binding and, consequently, for the gamma-phosphate positioning of ATP.

It localises to the cytoplasm. It carries out the reaction UDP-N-acetyl-alpha-D-muramoyl-L-alanyl-D-glutamate + meso-2,6-diaminopimelate + ATP = UDP-N-acetyl-alpha-D-muramoyl-L-alanyl-gamma-D-glutamyl-meso-2,6-diaminopimelate + ADP + phosphate + H(+). It participates in cell wall biogenesis; peptidoglycan biosynthesis. Functionally, catalyzes the addition of meso-diaminopimelic acid to the nucleotide precursor UDP-N-acetylmuramoyl-L-alanyl-D-glutamate (UMAG) in the biosynthesis of bacterial cell-wall peptidoglycan. This Chelativorans sp. (strain BNC1) protein is UDP-N-acetylmuramoyl-L-alanyl-D-glutamate--2,6-diaminopimelate ligase.